The chain runs to 367 residues: WD repeat-containing protein 31 (367 aa).

WD repeat units lie at residues 53 to 90 (AFQE…AYNW), 94 to 132 (NVVK…MWDL), 137 to 175 (QPRQ…LWDV), 179 to 217 (QSVE…LWDS), 221 to 264 (QVAH…LWDL), 269 to 311 (NRIC…IWNQ), and 315 to 353 (ACLF…LLRM).

The polypeptide is WD repeat-containing protein 31 (WDR31) (Homo sapiens (Human)).